The chain runs to 383 residues: S-adenosylmethionine synthase (383 aa).

His15 serves as a coordination point for ATP. Asp17 lines the Mg(2+) pocket. Glu43 serves as a coordination point for K(+). Positions 56 and 99 each coordinate L-methionine. Positions 99–109 (QSSDINQGVDR) are flexible loop. ATP contacts are provided by residues 164–166 (DAK), 230–231 (RF), Asp239, 245–246 (RK), Ala262, and Lys266. Asp239 contacts L-methionine. L-methionine is bound at residue Lys270.

This sequence belongs to the AdoMet synthase family. In terms of assembly, homotetramer; dimer of dimers. Mg(2+) is required as a cofactor. K(+) serves as cofactor.

The protein resides in the cytoplasm. The enzyme catalyses L-methionine + ATP + H2O = S-adenosyl-L-methionine + phosphate + diphosphate. It participates in amino-acid biosynthesis; S-adenosyl-L-methionine biosynthesis; S-adenosyl-L-methionine from L-methionine: step 1/1. Functionally, catalyzes the formation of S-adenosylmethionine (AdoMet) from methionine and ATP. The overall synthetic reaction is composed of two sequential steps, AdoMet formation and the subsequent tripolyphosphate hydrolysis which occurs prior to release of AdoMet from the enzyme. This Mannheimia succiniciproducens (strain KCTC 0769BP / MBEL55E) protein is S-adenosylmethionine synthase.